The chain runs to 85 residues: Small integral membrane protein 2 (85 aa).

The chain crosses the membrane as a helical span at residues 21–43; sequence GHAISILFGFWTSFICDTYIVLA. The disordered stretch occupies residues 51–85; it reads SPDVSASSDEPYARIQQSRRQCHAEEDQSQVPEAG.

It is found in the membrane. This chain is Small integral membrane protein 2 (SMIM2), found in Homo sapiens (Human).